The sequence spans 162 residues: Chemoreceptor glutamine deamidase CheD (162 aa).

Belongs to the CheD family. Forms a complex with CheC.

It catalyses the reaction L-glutaminyl-[protein] + H2O = L-glutamyl-[protein] + NH4(+). Deamidates glutamine residues to glutamate on methyl-accepting chemotaxis receptors (MCPs). CheD-mediated MCP deamidation is required for productive communication of the conformational signals of the chemoreceptors to the CheA kinase. This Halalkalibacterium halodurans (strain ATCC BAA-125 / DSM 18197 / FERM 7344 / JCM 9153 / C-125) (Bacillus halodurans) protein is Chemoreceptor glutamine deamidase CheD.